The sequence spans 68 residues: Beta-defensin 1 (68 aa).

A signal peptide spans 1–21 (MRTSYLLLFILCLVLCDMDSG). Residues 22 to 32 (DTFLTGLGHRS) constitute a propeptide that is removed on maturation. Disulfide bonds link Cys37-Cys66, Cys44-Cys59, and Cys49-Cys67.

It belongs to the beta-defensin family. Monomer. Homodimer.

It is found in the secreted. The protein resides in the membrane. Has bactericidal activity. May act as a ligand for C-C chemokine receptor CCR6. Positively regulates the sperm motility and bactericidal activity in a CCR6-dependent manner. Binds to CCR6 and triggers Ca2+ mobilization in the sperm which is important for its motility. This is Beta-defensin 1 (DEFB1) from Saguinus oedipus (Cotton-top tamarin).